The following is a 120-amino-acid chain: UPF0102 protein NT01CX_2205 (120 aa).

This sequence belongs to the UPF0102 family.

The chain is UPF0102 protein NT01CX_2205 from Clostridium novyi (strain NT).